Consider the following 137-residue polypeptide: Putative pre-16S rRNA nuclease (137 aa).

This sequence belongs to the YqgF nuclease family.

The protein localises to the cytoplasm. Its function is as follows. Could be a nuclease involved in processing of the 5'-end of pre-16S rRNA. This is Putative pre-16S rRNA nuclease from Anaeromyxobacter dehalogenans (strain 2CP-C).